We begin with the raw amino-acid sequence, 520 residues long: GMP synthase [glutamine-hydrolyzing] (520 aa).

Residues 3–200 (AIAIIDFGSQ…FLDIANCKRD (198 aa)) form the Glutamine amidotransferase type-1 domain. Cys84 functions as the Nucleophile in the catalytic mechanism. Residues His175 and Glu177 contribute to the active site. The 186-residue stretch at 201–386 (WTMKSFIEEQ…IGLSDEIIFQ (186 aa)) folds into the GMPS ATP-PPase domain. 228–234 (SGGVDSS) is a binding site for ATP.

As to quaternary structure, homodimer.

The catalysed reaction is XMP + L-glutamine + ATP + H2O = GMP + L-glutamate + AMP + diphosphate + 2 H(+). It participates in purine metabolism; GMP biosynthesis; GMP from XMP (L-Gln route): step 1/1. Its function is as follows. Catalyzes the synthesis of GMP from XMP. The chain is GMP synthase [glutamine-hydrolyzing] from Wolbachia pipientis wMel.